An 838-amino-acid polypeptide reads, in one-letter code: uncharacterized protein (838 aa).

This is an uncharacterized protein from Rickettsia conorii (strain ATCC VR-613 / Malish 7).